The sequence spans 106 residues: Putative membrane protein insertion efficiency factor (106 aa).

The protein belongs to the UPF0161 family.

Its subcellular location is the cell inner membrane. Could be involved in insertion of integral membrane proteins into the membrane. The chain is Putative membrane protein insertion efficiency factor from Acinetobacter baumannii (strain AB307-0294).